A 314-amino-acid chain; its full sequence is Acetyl-coenzyme A carboxylase carboxyl transferase subunit alpha (314 aa).

In terms of domain architecture, CoA carboxyltransferase C-terminal spans 32-289; sequence EIDMLEASLE…KSAFVEQLDS (258 aa).

Belongs to the AccA family. In terms of assembly, acetyl-CoA carboxylase is a heterohexamer composed of biotin carboxyl carrier protein (AccB), biotin carboxylase (AccC) and two subunits each of ACCase subunit alpha (AccA) and ACCase subunit beta (AccD).

It localises to the cytoplasm. The enzyme catalyses N(6)-carboxybiotinyl-L-lysyl-[protein] + acetyl-CoA = N(6)-biotinyl-L-lysyl-[protein] + malonyl-CoA. It participates in lipid metabolism; malonyl-CoA biosynthesis; malonyl-CoA from acetyl-CoA: step 1/1. Functionally, component of the acetyl coenzyme A carboxylase (ACC) complex. First, biotin carboxylase catalyzes the carboxylation of biotin on its carrier protein (BCCP) and then the CO(2) group is transferred by the carboxyltransferase to acetyl-CoA to form malonyl-CoA. The protein is Acetyl-coenzyme A carboxylase carboxyl transferase subunit alpha of Staphylococcus aureus (strain bovine RF122 / ET3-1).